The following is a 510-amino-acid chain: 2,3-bisphosphoglycerate-independent phosphoglycerate mutase (510 aa).

Positions 10 and 60 each coordinate Mn(2+). Catalysis depends on S60, which acts as the Phosphoserine intermediate. Substrate contacts are provided by residues H121, 150–151, R182, R188, 252–255, and K325; these read RD and RPDR. The Mn(2+) site is built by D392, H396, D433, H434, and H451.

It belongs to the BPG-independent phosphoglycerate mutase family. It depends on Mn(2+) as a cofactor.

It is found in the plastid. It localises to the chloroplast. It catalyses the reaction (2R)-2-phosphoglycerate = (2R)-3-phosphoglycerate. It participates in carbohydrate degradation; glycolysis; pyruvate from D-glyceraldehyde 3-phosphate: step 3/5. Functionally, catalyzes the interconversion of 2-phosphoglycerate and 3-phosphoglycerate. This chain is 2,3-bisphosphoglycerate-independent phosphoglycerate mutase, found in Gracilaria tenuistipitata var. liui (Red alga).